Here is a 432-residue protein sequence, read N- to C-terminus: Amino acid transporter ANT1 (432 aa).

The tract at residues 1 to 30 (MAIKDLTATTGDSSLPLIKSPPSETTGGDR) is disordered. Topologically, residues 1–35 (MAIKDLTATTGDSSLPLIKSPPSETTGGDRTSALQ) are cytoplasmic. The chain crosses the membrane as a helical span at residues 36-56 (TLGNIIVSIVGTGVLGLPYAF). Topologically, residues 57 to 62 (RIAGWL) are lumenal. The helical transmembrane segment at 63–83 (AGSLGVIIVGFATYYCMLLLI) threads the bilayer. Topologically, residues 84–115 (QCRDKLESEEGEEESKTYGDLGFKCMGTKGRY) are cytoplasmic. A helical membrane pass occupies residues 116–136 (LTEFLIFTAQCGGSVAYLVFI). The Lumenal portion of the chain corresponds to 137–147 (GRNLSSIFSSY). The chain crosses the membrane as a helical span at residues 148-168 (GLSMVSFILILVPIEVGLSWI). Residues 169-172 (TSLS) are Cytoplasmic-facing. The chain crosses the membrane as a helical span at residues 173–193 (ALSPFSIFADICNIIAMCFVV). The Lumenal segment spans residues 194–219 (KENVEMVIEGDFSFSDRTAISSTIGG). A helical membrane pass occupies residues 220 to 240 (LPFAGGVAVFCFEGFAMTLAL). Over 241-256 (ESSMREREAFPKLLAK) the chain is Cytoplasmic. Residues 257–277 (VLAGITFVYVLFGFCGYMAYG) traverse the membrane as a helical segment. The Lumenal segment spans residues 278-292 (DQTKDIITLNLPNNW). Residues 293-313 (SAIAVQIGLCVGLTFTFPIMV) traverse the membrane as a helical segment. Residues 314-353 (HPLNEIIEQKLKRIDWLQKHHNGYSNETGSVSKFAIFTTR) are Cytoplasmic-facing. Residues 354 to 374 (TLLVVGLAAIASLVPGFGTFA) form a helical membrane-spanning segment. Residues 375–379 (SLVGS) lie on the Lumenal side of the membrane. A helical transmembrane segment spans residues 380-400 (TLCALISFVLPASYHLTLLGP). Residues 401 to 410 (SLNVWNKSID) are Cytoplasmic-facing. Residues 411–431 (VFIVICGLIFAVYGTYNTIVG) form a helical membrane-spanning segment. Residue Val-432 is a topological domain, lumenal.

The protein belongs to the amino acid/polyamine transporter 2 family. Amino acid/auxin permease (AAAP) (TC 2.A.18.8) subfamily. In terms of tissue distribution, ubiquitous. Highly expressed in flowers and cauline leaves and at lower levels in stems, leaves and roots.

It is found in the endoplasmic reticulum membrane. Functionally, translocates aromatic and neutral amino acids such as tyrosine, tryptophan, phenylalanine, histidine, proline, leucine, valine, glutamine, as well as arginine. Transports the auxins indole-3-acetic acid (IAA) and 2,4-dichlorophenoxyacetic acid (2,4-D). The protein is Amino acid transporter ANT1 of Arabidopsis thaliana (Mouse-ear cress).